Here is a 375-residue protein sequence, read N- to C-terminus: uncharacterized protein (375 aa).

This sequence belongs to the IMPDH/GMPR family.

This is an uncharacterized protein from Mycobacterium tuberculosis (strain CDC 1551 / Oshkosh).